Consider the following 288-residue polypeptide: Elongation factor Ts (288 aa).

The tract at residues 79–82 is involved in Mg(2+) ion dislocation from EF-Tu; it reads TDFV.

This sequence belongs to the EF-Ts family.

The protein localises to the cytoplasm. Functionally, associates with the EF-Tu.GDP complex and induces the exchange of GDP to GTP. It remains bound to the aminoacyl-tRNA.EF-Tu.GTP complex up to the GTP hydrolysis stage on the ribosome. This chain is Elongation factor Ts, found in Ehrlichia ruminantium (strain Welgevonden).